The sequence spans 64 residues: MAVQKSRVTPSRRGMRRAHDALSAKQLSTDPTTGEVHLRHHITADGFYRGKKVIQTKTSAVEED.

The segment at 1-35 (MAVQKSRVTPSRRGMRRAHDALSAKQLSTDPTTGE) is disordered.

The protein belongs to the bacterial ribosomal protein bL32 family.

The chain is Large ribosomal subunit protein bL32 from Stenotrophomonas maltophilia (strain R551-3).